Reading from the N-terminus, the 454-residue chain is Pup--protein ligase (454 aa).

Glu9 serves as a coordination point for Mg(2+). Residue Arg53 participates in ATP binding. Tyr55 is a binding site for Mg(2+). The active-site Proton acceptor is the Asp57. Glu63 serves as a coordination point for Mg(2+). ATP-binding residues include Thr66 and Trp421.

It belongs to the Pup ligase/Pup deamidase family. Pup-conjugating enzyme subfamily.

The enzyme catalyses ATP + [prokaryotic ubiquitin-like protein]-L-glutamate + [protein]-L-lysine = ADP + phosphate + N(6)-([prokaryotic ubiquitin-like protein]-gamma-L-glutamyl)-[protein]-L-lysine.. Its pathway is protein degradation; proteasomal Pup-dependent pathway. The protein operates within protein modification; protein pupylation. Catalyzes the covalent attachment of the prokaryotic ubiquitin-like protein modifier Pup to the proteasomal substrate proteins, thereby targeting them for proteasomal degradation. This tagging system is termed pupylation. The ligation reaction involves the side-chain carboxylate of the C-terminal glutamate of Pup and the side-chain amino group of a substrate lysine. In Frankia casuarinae (strain DSM 45818 / CECT 9043 / HFP020203 / CcI3), this protein is Pup--protein ligase.